The sequence spans 335 residues: Nonaprenyl diphosphate synthase (335 aa).

Isopentenyl diphosphate contacts are provided by Lys57, Arg60, and His90. Residues Asp97 and Asp101 each contribute to the Mg(2+) site. A DDXXD motif motif is present at residues Asp97 to Asp101. Arg107 contacts isopentenyl diphosphate. The DDXXD motif motif lies at Asp223–Asp227.

This sequence belongs to the FPP/GGPP synthase family. Mg(2+) is required as a cofactor.

It catalyses the reaction isopentenyl diphosphate + (2E)-geranyl diphosphate = (2E,6E)-farnesyl diphosphate + diphosphate. The catalysed reaction is isopentenyl diphosphate + (2E,6E)-farnesyl diphosphate = (2E,6E,10E)-geranylgeranyl diphosphate + diphosphate. It carries out the reaction 5 isopentenyl diphosphate + (2E,6E,10E)-geranylgeranyl diphosphate = all-trans-nonaprenyl diphosphate + 5 diphosphate. It functions in the pathway isoprenoid biosynthesis; farnesyl diphosphate biosynthesis; farnesyl diphosphate from geranyl diphosphate and isopentenyl diphosphate. It participates in isoprenoid biosynthesis; geranylgeranyl diphosphate biosynthesis; geranylgeranyl diphosphate from farnesyl diphosphate and isopentenyl diphosphate: step 1/1. Its function is as follows. Catalyzes the sequential condensations of isopentenyl pyrophosphate (IPP) with geranyl diphosphate (GPP) to yield (2E,6E)-farnesyl diphosphate (E,E-FPP), with E,E-FPP to yield geranylgeranyl diphosphate (GGPP) and with GGPP to yield nonaprenyl diphosphate. May also have weak activity with dimethylallyl diphosphate (DMAPP). This chain is Nonaprenyl diphosphate synthase, found in Mycobacterium tuberculosis (strain ATCC 25618 / H37Rv).